Consider the following 399-residue polypeptide: Adenylate cyclase (399 aa).

Positions 1–10 are enriched in polar residues; it reads MTVGDTTSGS. The segment at 1–35 is disordered; that stretch reads MTVGDTTSGSGEEPAADSSVHATPHHEVDHTVEPT. Residues 24-33 show a composition bias toward basic and acidic residues; that stretch reads PHHEVDHTVE. The 110-residue stretch at 198-307 folds into the Guanylate cyclase domain; that stretch reads RVRFADLVGF…TTVNLASRLT (110 aa). The Mg(2+) site is built by Asp203 and Asp247.

This sequence belongs to the adenylyl cyclase class-3 family. Mg(2+) is required as a cofactor.

It carries out the reaction ATP = 3',5'-cyclic AMP + diphosphate. In Streptomyces griseus, this protein is Adenylate cyclase (cya).